Here is a 173-residue protein sequence, read N- to C-terminus: Co-chaperone protein HscB homolog (173 aa).

Residues 5-77 enclose the J domain; that stretch reads CHFAQFDLQP…PRRALYLLTL (73 aa).

The protein belongs to the HscB family. Interacts with HscA and stimulates its ATPase activity.

Its function is as follows. Co-chaperone involved in the maturation of iron-sulfur cluster-containing proteins. Seems to help targeting proteins to be folded toward HscA. In Pseudomonas aeruginosa (strain UCBPP-PA14), this protein is Co-chaperone protein HscB homolog.